Reading from the N-terminus, the 338-residue chain is Mitochondrial amidoxime reducing component 2 (338 aa).

A mitochondrion-targeting transit peptide spans methionine 1–leucine 35. Glycyl lysine isopeptide (Lys-Gly) (interchain with G-Cter in ubiquitin) cross-links involve residues lysine 59, lysine 138, and lysine 144. Lysine 156 is subject to N6-acetyllysine; alternate. A Glycyl lysine isopeptide (Lys-Gly) (interchain with G-Cter in ubiquitin); alternate cross-link involves residue lysine 156. Residues lysine 173, lysine 187, lysine 289, and lysine 296 each participate in a glycyl lysine isopeptide (Lys-Gly) (interchain with G-Cter in ubiquitin) cross-link. The MOSC domain occupies glycine 188–methionine 336.

As to quaternary structure, component of a complex composed of cytochrome b5, NADH-cytochrome b5 reductase (CYB5R3) and MTARC2. Requires Mo-molybdopterin as cofactor. Ubiquitinated by PRKN during mitophagy, leading to its degradation and enhancement of mitophagy. Deubiquitinated by USP30.

Its subcellular location is the mitochondrion outer membrane. The protein localises to the peroxisome. The enzyme catalyses N(omega)-hydroxy-L-arginine + 2 Fe(II)-[cytochrome b5] + 2 H(+) = L-arginine + 2 Fe(III)-[cytochrome b5] + H2O. Catalyzes the reduction of N-oxygenated molecules, acting as a counterpart of cytochrome P450 and flavin-containing monooxygenases in metabolic cycles. As a component of prodrug-converting system, reduces a multitude of N-hydroxylated prodrugs particularly amidoximes, leading to increased drug bioavailability. May be involved in mitochondrial N(omega)-hydroxy-L-arginine (NOHA) reduction, regulating endogenous nitric oxide levels and biosynthesis. Postulated to cleave the N-OH bond of N-hydroxylated substrates in concert with electron transfer from NADH to cytochrome b5 reductase then to cytochrome b5, the ultimate electron donor that primes the active site for substrate reduction. This Rattus norvegicus (Rat) protein is Mitochondrial amidoxime reducing component 2 (Mtarc2).